A 135-amino-acid polypeptide reads, in one-letter code: Putative pre-16S rRNA nuclease (135 aa).

The protein belongs to the YqgF nuclease family.

It localises to the cytoplasm. Could be a nuclease involved in processing of the 5'-end of pre-16S rRNA. This Thermus thermophilus (strain ATCC 27634 / DSM 579 / HB8) protein is Putative pre-16S rRNA nuclease.